Here is a 244-residue protein sequence, read N- to C-terminus: NAD-dependent protein deacetylase (244 aa).

Positions 1–244 (MDDKINKLKE…IGKVLGKVID (244 aa)) constitute a Deacetylase sirtuin-type domain. NAD(+)-binding residues include Ala-24, Thr-28, Phe-35, Arg-36, Gln-105, Ile-107, Asp-108, and His-123. A nicotinamide-binding site is contributed by Phe-35. The nicotinamide site is built by Ile-107 and Asp-108. His-123 serves as the catalytic Proton acceptor. Zn(2+) contacts are provided by Cys-131, Cys-134, Cys-152, and Cys-155. Residues Thr-193, Ser-194, Asn-217, and Ile-235 each contribute to the NAD(+) site.

This sequence belongs to the sirtuin family. Class U subfamily. Zn(2+) is required as a cofactor.

The protein resides in the cytoplasm. It catalyses the reaction N(6)-acetyl-L-lysyl-[protein] + NAD(+) + H2O = 2''-O-acetyl-ADP-D-ribose + nicotinamide + L-lysyl-[protein]. Its function is as follows. NAD-dependent protein deacetylase which modulates the activities of several enzymes which are inactive in their acetylated form. The polypeptide is NAD-dependent protein deacetylase (Clostridium perfringens (strain 13 / Type A)).